We begin with the raw amino-acid sequence, 371 residues long: MPNQHPLLSSNLLPVGSNISTWWNFGSMLLTCLALQTSTGFFLAIHYTANINLAFSSMIHILRDVPYGWTMQNLHAIGASLFFMCIYTHIARGLYYGLYMNKWVWLSGTILLMLLMATAFFGYVLPWGQMSFWAATVITNLLTAIPYIGTTLTTWLWGGFSINDPTLTRFFALHFILPFLIISLSSVHIILLHNDGSNNPLGTNPDIDKIPFHPYHSYKDMLMTTIMITLLFIIMSFSPDLFNDPENFSKANPLVTPQHIKPEWYFLFAYGILRSIPNKLGGTLALLMSIMILTTTPFTHTSHVRSMTFRPFTQLLFWTLIATFITITWTATKPVEPPFILISQTASVIYFSFFIINPVLGLIENKAMMTK.

The next 4 helical transmembrane spans lie at 25-45 (FGSMLLTCLALQTSTGFFLAI), 69-90 (WTMQNLHAIGASLFFMCIYTHI), 105-125 (WLSGTILLMLLMATAFFGYVL), and 170-190 (FFALHFILPFLIISLSSVHII). Residues histidine 75 and histidine 89 each coordinate heme b. Histidine 174 and histidine 188 together coordinate heme b. Histidine 193 serves as a coordination point for a ubiquinone. Transmembrane regions (helical) follow at residues 218-238 (YKDMLMTTIMITLLFIIMSFS), 280-300 (LGGTLALLMSIMILTTTPFTH), 312-332 (FTQLLFWTLIATFITITWTAT), and 339-358 (FILISQTASVIYFSFFIINP).

This sequence belongs to the cytochrome b family. In terms of assembly, the cytochrome bc1 complex contains 3 respiratory subunits (MT-CYB, CYC1 and UQCRFS1), 2 core proteins (UQCRC1 and UQCRC2) and probably 6 low-molecular weight proteins. Heme b is required as a cofactor.

Its subcellular location is the mitochondrion inner membrane. Component of the ubiquinol-cytochrome c reductase complex (complex III or cytochrome b-c1 complex) that is part of the mitochondrial respiratory chain. The b-c1 complex mediates electron transfer from ubiquinol to cytochrome c. Contributes to the generation of a proton gradient across the mitochondrial membrane that is then used for ATP synthesis. This Elapognathus coronatus (Western crowned snake) protein is Cytochrome b (MT-CYB).